Reading from the N-terminus, the 883-residue chain is UTP--glucose-1-phosphate uridylyltransferase 3, chloroplastic (883 aa).

A chloroplast-targeting transit peptide spans 1-72 (MANPQASPIL…HQVRHVSTVP (72 aa)).

This sequence belongs to the UDPGP type 1 family. It depends on Mg(2+) as a cofactor.

It is found in the plastid. Its subcellular location is the chloroplast. It carries out the reaction alpha-D-glucose 1-phosphate + UTP + H(+) = UDP-alpha-D-glucose + diphosphate. Inhibited by pyrophosphate. Functionally, involved in the biosynthesis of sulfolipids in the chloroplast. Catalyzes the first committed step in sulfolipid biosynthesis. Converts glucose 1-phosphate to UDP-glucose, the precursor of the polar head of sulfolipid. In addition to glucose 1-phosphate, can use galactose 1-phosphate, but with much lower activity. No uridyltransferase activity with other hexose monophosphates. Specific for UTP and cannot use ATP, CTP, and GTP. This Arabidopsis thaliana (Mouse-ear cress) protein is UTP--glucose-1-phosphate uridylyltransferase 3, chloroplastic.